We begin with the raw amino-acid sequence, 347 residues long: tRNA pseudouridine synthase D (347 aa).

Catalysis depends on Asp-81, which acts as the Nucleophile. Residues 158–304 (GVPNYFGNQR…MRHDRRAIAL (147 aa)) form the TRUD domain.

This sequence belongs to the pseudouridine synthase TruD family.

It carries out the reaction uridine(13) in tRNA = pseudouridine(13) in tRNA. Functionally, responsible for synthesis of pseudouridine from uracil-13 in transfer RNAs. The polypeptide is tRNA pseudouridine synthase D (Vibrio vulnificus (strain CMCP6)).